The chain runs to 167 residues: MAPAVATWAPGLWRACNALMAAFFALAAVVQVNDPDAELWVVVYMIPAVLTLLVGFNPLVTGNFIWKSVSAIHMLFCALWAGGLAYHFLLHAKQNLLNEEEGRELSGLVIVTAWMALCHSSSKNPGGGRMHLAIAVVITLLPLLSWVYVHMNKEMRSSWPTHCKTVI.

5 helical membrane-spanning segments follow: residues Pro10 to Val30, Trp40 to Val60, Val69 to Leu89, Glu104 to Ser122, and Met130 to His150.

The protein resides in the membrane. This is Transmembrane protein 220 (Tmem220) from Mus musculus (Mouse).